The primary structure comprises 281 residues: CLA biosynthesis isomerase (281 aa).

The protein belongs to the ADC family.

Its subcellular location is the cytoplasm. It catalyses the reaction 10-oxo-(12Z)-octadecenoate = 10-oxo-(11E)-octadecenoate. It functions in the pathway lipid metabolism; fatty acid metabolism. In terms of biological role, is involved in a saturation metabolic pathway of polyunsaturated fatty acids, that detoxifies unsaturated fatty acids and generates hydroxy fatty acids, oxo fatty acids, conjugated fatty acids such as conjugated linoleic acids (CLAs), and partially saturated trans-fatty acids as intermediates. CLA-DC catalyzes the migration of the carbon-carbon double bond in 10-oxo-(12Z)-octadecenoate to produce 10-oxo-(11E)-octadecenoate, during linoleate metabolism. As part of the gut microbiome, this enzyme modifies host fatty acid composition and is expected to improve human health by altering lipid metabolism related to the onset of metabolic syndrome. The protein is CLA biosynthesis isomerase of Lactiplantibacillus plantarum (Lactobacillus plantarum).